A 471-amino-acid chain; its full sequence is ATP synthase subunit beta (471 aa).

153 to 160 is a binding site for ATP; the sequence is GGAGVGKT.

Belongs to the ATPase alpha/beta chains family. F-type ATPases have 2 components, CF(1) - the catalytic core - and CF(0) - the membrane proton channel. CF(1) has five subunits: alpha(3), beta(3), gamma(1), delta(1), epsilon(1). CF(0) has four main subunits: a(1), b(1), b'(1) and c(9-12).

The protein resides in the cell membrane. It catalyses the reaction ATP + H2O + 4 H(+)(in) = ADP + phosphate + 5 H(+)(out). Its function is as follows. Produces ATP from ADP in the presence of a proton gradient across the membrane. The catalytic sites are hosted primarily by the beta subunits. This Roseiflexus castenholzii (strain DSM 13941 / HLO8) protein is ATP synthase subunit beta.